Reading from the N-terminus, the 263-residue chain is N-acyl homoserine lactonase AttM (263 aa).

Zn(2+)-binding residues include His103, His105, Asp107, His108, His180, Asp202, and His247.

The protein belongs to the metallo-beta-lactamase superfamily. Zn(2+) serves as cofactor.

The enzyme catalyses an N-acyl-L-homoserine lactone + H2O = an N-acyl-L-homoserine + H(+). This is N-acyl homoserine lactonase AttM from Agrobacterium fabrum (strain C58 / ATCC 33970) (Agrobacterium tumefaciens (strain C58)).